A 155-amino-acid chain; its full sequence is Small ribosomal subunit protein uS7 (155 aa).

It belongs to the universal ribosomal protein uS7 family. In terms of assembly, part of the 30S ribosomal subunit. Contacts proteins S9 and S11.

One of the primary rRNA binding proteins, it binds directly to 16S rRNA where it nucleates assembly of the head domain of the 30S subunit. Is located at the subunit interface close to the decoding center, probably blocks exit of the E-site tRNA. In Thermosipho melanesiensis (strain DSM 12029 / CIP 104789 / BI429), this protein is Small ribosomal subunit protein uS7.